The chain runs to 487 residues: Serine carboxypeptidase-like 38 (487 aa).

The first 20 residues, 1-20 (MGKQQDWSVTACIFLSLSLA), serve as a signal peptide directing secretion. 3 disulfide bridges follow: cysteine 119/cysteine 368, cysteine 280/cysteine 290, and cysteine 315/cysteine 336. Serine 215 is an active-site residue. A glycan (N-linked (GlcNAc...) asparagine) is linked at asparagine 233. 2 N-linked (GlcNAc...) asparagine glycosylation sites follow: asparagine 317 and asparagine 357. The active site involves aspartate 407. N-linked (GlcNAc...) asparagine glycans are attached at residues asparagine 423 and asparagine 449. Histidine 460 is a catalytic residue.

This sequence belongs to the peptidase S10 family. As to expression, expressed in seedlings, roots, leaves, flowers and siliques.

The protein resides in the secreted. In terms of biological role, probable carboxypeptidase. The chain is Serine carboxypeptidase-like 38 (SCPL38) from Arabidopsis thaliana (Mouse-ear cress).